Reading from the N-terminus, the 743-residue chain is Putative pentatricopeptide repeat-containing protein At1g68930 (743 aa).

15 PPR repeats span residues glutamate 40 to proline 70, asparagine 71 to arginine 101, aspartate 102 to aspartate 132, threonine 138 to serine 172, tyrosine 173 to arginine 203, asparagine 204 to lysine 233, aspartate 234 to methionine 268, aspartate 269 to aspartate 303, histidine 304 to lysine 334, asparagine 335 to proline 369, aspartate 370 to histidine 404, tyrosine 405 to arginine 435, aspartate 436 to proline 470, aspartate 471 to proline 506, and serine 507 to proline 537. The segment at glycine 542–lysine 617 is type E motif. Residues glycine 618–isoleucine 648 form a type E(+) motif region. A type DYW motif region spans residues aspartate 649–tryptophan 743.

Belongs to the PPR family. PCMP-H subfamily.

This chain is Putative pentatricopeptide repeat-containing protein At1g68930 (PCMP-H22), found in Arabidopsis thaliana (Mouse-ear cress).